Consider the following 239-residue polypeptide: tRNA (guanine-N(7)-)-methyltransferase (239 aa).

Glu-69, Glu-94, Asp-121, and Asp-144 together coordinate S-adenosyl-L-methionine. Asp-144 is a catalytic residue. Lys-148 serves as a coordination point for substrate. Positions 150 to 155 are interaction with RNA; it reads RHNKRR. Substrate contacts are provided by residues Asp-180 and 217-220; that span reads TKFE.

It belongs to the class I-like SAM-binding methyltransferase superfamily. TrmB family. Monomer.

It catalyses the reaction guanosine(46) in tRNA + S-adenosyl-L-methionine = N(7)-methylguanosine(46) in tRNA + S-adenosyl-L-homocysteine. It participates in tRNA modification; N(7)-methylguanine-tRNA biosynthesis. Its function is as follows. Catalyzes the formation of N(7)-methylguanine at position 46 (m7G46) in tRNA. This Shigella dysenteriae serotype 1 (strain Sd197) protein is tRNA (guanine-N(7)-)-methyltransferase.